The following is a 628-amino-acid chain: Basal cell adhesion molecule (628 aa).

Residues 1–31 form the signal peptide; sequence MEPPDARAGARRAPRLLVLALLLAAPPGSKA. Ig-like V-type domains lie at 32-142 and 150-253; these read EVRL…ARLK and PEVS…RLDG. Residues 32–547 lie on the Extracellular side of the membrane; the sequence is EVRLSVPPLV…GTVAPQTSQA (516 aa). Intrachain disulfides connect cysteine 53–cysteine 125, cysteine 172–cysteine 237, and cysteine 291–cysteine 337. Ig-like C2-type domains are found at residues 254–355, 355–441, and 448–538; these read PSFS…KTLE, ELRV…RSFR, and PELK…FHFG. Asparagine 321, asparagine 330, and asparagine 378 each carry an N-linked (GlcNAc...) asparagine glycan. 2 disulfides stabilise this stretch: cysteine 384-cysteine 424 and cysteine 473-cysteine 522. The helical transmembrane segment at 548-568 threads the bilayer; sequence GVAVMAVAISVALLLLVVAVF. At 569-628 the chain is on the cytoplasmic side; that stretch reads YCMRRKGRPGCCQWGEKGSPPPGEPKLSHSGSQRPEQTGLLMGSASGGAKHGSGGFGDEC. Residues 580-628 form a disordered region; it reads CQWGEKGSPPPGEPKLSHSGSQRPEQTGLLMGSASGGAKHGSGGFGDEC. Residues serine 596, serine 598, serine 600, and serine 621 each carry the phosphoserine modification. The span at 613 to 628 shows a compositional bias: gly residues; that stretch reads ASGGAKHGSGGFGDEC.

Homodimer. Interacts with ITGA4:ITGB1. Interacts with spectrins SPTA1 and SPTB1. Post-translationally, epinephrine-stimulated phosphorylation of Ser-621 by PKA enhances adhesion to laminin. Ser-621 can also be phosphorylated by AKT1.

It localises to the cell membrane. Its function is as follows. Transmembrane glycoprotein that functions as both a receptor and an adhesion molecule playing a crucial role in cell adhesion, motility, migration and invasion. Extracellular domain enables binding to extracellular matrix proteins, such as laminin, integrin and other ligands while its intracellular domain interacts with cytoskeletal proteins like hemoglobin, facilitating cell signal transduction. Serves as a receptor for laminin alpha-5/LAMA5 to promote cell adhesion. Mechanistically, JAK2 induces BCAM phosphorylation and activates its adhesion to laminin by stimulating a Rap1/AKT signaling pathway in the absence of EPOR. The chain is Basal cell adhesion molecule (BCAM) from Bos taurus (Bovine).